Reading from the N-terminus, the 267-residue chain is Apolipoprotein A-I (267 aa).

A signal peptide spans 1-18 (MKATVLTLAVLFLTGSQA). 2 tandem repeats follow at residues 68–89 (LKLL…EQLG) and 90–111 (PVTQ…QEMS). Positions 68–267 (LKLLDNWDSV…EEYTKKLSTQ (200 aa)) are 10 X approximate tandem repeats. M110 is subject to Methionine sulfoxide. Residues 112 to 122 (KDLEEVKAKVQ) form a 3; half-length repeat. Repeat copies occupy residues 123–144 (PYLD…QKVE), 145–166 (PLRA…EKLS), 167–188 (PLGE…THLA), 189–210 (PYSD…ENGG), and 211–232 (ARLA…EKAK). M136 bears the Methionine sulfoxide mark. The stretch at 233-243 (PALEDLRQGLL) is one 9; half-length repeat. Repeat unit 10 spans residues 244–267 (PVLESFKVSFLSALEEYTKKLSTQ).

This sequence belongs to the apolipoprotein A1/A4/E family. Homodimer. Interacts with APOA1BP and CLU. Component of a sperm activating protein complex (SPAP), consisting of APOA1, an immunoglobulin heavy chain, an immunoglobulin light chain and albumin. Interacts with NDRG1. Interacts with SCGB3A2. Interacts with NAXE and YJEFN3. Post-translationally, glycosylated. Palmitoylated. In terms of processing, phosphorylation sites are present in the extracellular medium. As to expression, major protein of plasma HDL, also found in chylomicrons.

It localises to the secreted. In terms of biological role, participates in the reverse transport of cholesterol from tissues to the liver for excretion by promoting cholesterol efflux from tissues and by acting as a cofactor for the lecithin cholesterol acyltransferase (LCAT). As part of the SPAP complex, activates spermatozoa motility. In Papio hamadryas (Hamadryas baboon), this protein is Apolipoprotein A-I (APOA1).